Here is a 209-residue protein sequence, read N- to C-terminus: Ubiquinone biosynthesis protein COQ4 homolog 2, mitochondrial (209 aa).

The Zn(2+) site is built by histidine 118, aspartate 119, histidine 122, and glutamate 134.

Belongs to the COQ4 family. In terms of assembly, component of a multi-subunit COQ enzyme complex. The cofactor is Zn(2+).

The protein resides in the mitochondrion inner membrane. The catalysed reaction is a 4-hydroxy-3-methoxy-5-(all-trans-polyprenyl)benzoate + H(+) = a 2-methoxy-6-(all-trans-polyprenyl)phenol + CO2. It participates in cofactor biosynthesis; ubiquinone biosynthesis. Functionally, lyase that catalyzes the C1-decarboxylation of 4-hydroxy-3-methoxy-5-(all-trans-polyprenyl)benzoic acid into 2-methoxy-6-(all-trans-polyprenyl)phenol during ubiquinone biosynthesis. This chain is Ubiquinone biosynthesis protein COQ4 homolog 2, mitochondrial, found in Paramecium tetraurelia.